Consider the following 138-residue polypeptide: ATP synthase epsilon chain (138 aa).

This sequence belongs to the ATPase epsilon chain family. In terms of assembly, F-type ATPases have 2 components, CF(1) - the catalytic core - and CF(0) - the membrane proton channel. CF(1) has five subunits: alpha(3), beta(3), gamma(1), delta(1), epsilon(1). CF(0) has three main subunits: a, b and c.

The protein localises to the cell membrane. Functionally, produces ATP from ADP in the presence of a proton gradient across the membrane. This Streptococcus equinus (Streptococcus bovis) protein is ATP synthase epsilon chain.